The sequence spans 468 residues: Probable multidrug resistance protein NorM (468 aa).

Transmembrane regions (helical) follow at residues 57-79 (LAAG…GVLT), 100-122 (IYWT…LSFA), 142-164 (YAAV…RSFL), 173-195 (LLWV…IHGA), 205-227 (GSAT…LLHG), 248-270 (LFGI…LATG), 280-302 (SLAA…LAIG), 323-345 (HAGF…VLIV), 360-382 (PANA…FQIV), 401-423 (VPML…WFAF), and 433-452 (WWGL…WRFH).

It belongs to the multi antimicrobial extrusion (MATE) (TC 2.A.66.1) family.

It is found in the cell inner membrane. Multidrug efflux pump. The chain is Probable multidrug resistance protein NorM (norM) from Burkholderia mallei (strain ATCC 23344).